Reading from the N-terminus, the 36-residue chain is Amanexitide proprotein 2 (36 aa).

A propeptide spanning residues 1–10 (MSDINATRLP) is cleaved from the precursor. The cyclopeptide (Val-Pro) cross-link spans 11 to 19 (VFSLPVFFP). The propeptide occupies 20-36 (FVSDDIQAVLTRGESLC).

This sequence belongs to the MSDIN fungal toxin family. Processed by the macrocyclase-peptidase enzyme POPB to yield a toxic cyclic nonapeptide. POPB first removes 10 residues from the N-terminus. Conformational trapping of the remaining peptide forces the enzyme to release this intermediate rather than proceed to macrocyclization. The enzyme rebinds the remaining peptide in a different conformation and catalyzes macrocyclization of the N-terminal 9 residues. Expressed in basidiocarps.

In terms of biological role, cyclic nonapeptide that belongs to the MSDIN-like toxin family responsible for a large number of food poisoning cases and deaths. The chain is Amanexitide proprotein 2 from Amanita exitialis (Guangzhou destroying angel).